Reading from the N-terminus, the 240-residue chain is Large ribosomal subunit protein uL2 (240 aa).

The segment covering 1 to 11 has biased composition (polar residues); that stretch reads MGKRLISQNRG. Disordered stretches follow at residues 1-28 and 206-240; these read MGKR…KGAV and GGGR…TGRK. Basic residues-rich tracts occupy residues 13–28 and 224–240; these read GTPK…KGAV and SPGR…TGRK.

This sequence belongs to the universal ribosomal protein uL2 family. In terms of assembly, part of the 50S ribosomal subunit. Forms a bridge to the 30S subunit in the 70S ribosome.

In terms of biological role, one of the primary rRNA binding proteins. Required for association of the 30S and 50S subunits to form the 70S ribosome, for tRNA binding and peptide bond formation. It has been suggested to have peptidyltransferase activity; this is somewhat controversial. Makes several contacts with the 16S rRNA in the 70S ribosome. The protein is Large ribosomal subunit protein uL2 of Methanococcus maripaludis (strain C5 / ATCC BAA-1333).